The sequence spans 394 residues: 1-deoxy-D-xylulose 5-phosphate reductoisomerase (394 aa).

NADPH is bound by residues threonine 12, glycine 13, serine 14, isoleucine 15, glycine 38, asparagine 41, and asparagine 132. Lysine 133 contacts 1-deoxy-D-xylulose 5-phosphate. Residue glutamate 134 participates in NADPH binding. Position 156 (aspartate 156) interacts with Mn(2+). The 1-deoxy-D-xylulose 5-phosphate site is built by serine 157, glutamate 158, serine 182, and histidine 205. Mn(2+) is bound at residue glutamate 158. Position 211 (glycine 211) interacts with NADPH. 1-deoxy-D-xylulose 5-phosphate contacts are provided by serine 218, asparagine 223, lysine 224, and glutamate 227. Mn(2+) is bound at residue glutamate 227.

It belongs to the DXR family. It depends on Mg(2+) as a cofactor. The cofactor is Mn(2+).

It catalyses the reaction 2-C-methyl-D-erythritol 4-phosphate + NADP(+) = 1-deoxy-D-xylulose 5-phosphate + NADPH + H(+). Its pathway is isoprenoid biosynthesis; isopentenyl diphosphate biosynthesis via DXP pathway; isopentenyl diphosphate from 1-deoxy-D-xylulose 5-phosphate: step 1/6. Functionally, catalyzes the NADPH-dependent rearrangement and reduction of 1-deoxy-D-xylulose-5-phosphate (DXP) to 2-C-methyl-D-erythritol 4-phosphate (MEP). The polypeptide is 1-deoxy-D-xylulose 5-phosphate reductoisomerase (Pseudarthrobacter chlorophenolicus (strain ATCC 700700 / DSM 12829 / CIP 107037 / JCM 12360 / KCTC 9906 / NCIMB 13794 / A6) (Arthrobacter chlorophenolicus)).